The chain runs to 89 residues: Small ribosomal subunit protein bS20 (89 aa).

Belongs to the bacterial ribosomal protein bS20 family.

Functionally, binds directly to 16S ribosomal RNA. The polypeptide is Small ribosomal subunit protein bS20 (Syntrophus aciditrophicus (strain SB)).